Reading from the N-terminus, the 229-residue chain is Enolase-phosphatase E1 (229 aa).

This sequence belongs to the HAD-like hydrolase superfamily. MasA/MtnC family. Monomer. Mg(2+) serves as cofactor.

The catalysed reaction is 5-methylsulfanyl-2,3-dioxopentyl phosphate + H2O = 1,2-dihydroxy-5-(methylsulfanyl)pent-1-en-3-one + phosphate. It participates in amino-acid biosynthesis; L-methionine biosynthesis via salvage pathway; L-methionine from S-methyl-5-thio-alpha-D-ribose 1-phosphate: step 3/6. It functions in the pathway amino-acid biosynthesis; L-methionine biosynthesis via salvage pathway; L-methionine from S-methyl-5-thio-alpha-D-ribose 1-phosphate: step 4/6. In terms of biological role, bifunctional enzyme that catalyzes the enolization of 2,3-diketo-5-methylthiopentyl-1-phosphate (DK-MTP-1-P) into the intermediate 2-hydroxy-3-keto-5-methylthiopentenyl-1-phosphate (HK-MTPenyl-1-P), which is then dephosphorylated to form the acireductone 1,2-dihydroxy-3-keto-5-methylthiopentene (DHK-MTPene). This chain is Enolase-phosphatase E1, found in Yersinia enterocolitica serotype O:8 / biotype 1B (strain NCTC 13174 / 8081).